The chain runs to 298 residues: Spermidine synthase (298 aa).

The 236-residue stretch at 13–248 folds into the PABS domain; sequence DGWFREINNM…GSIGFVVASK (236 aa). Residue Gln44 participates in S-adenosyl 3-(methylsulfanyl)propylamine binding. Position 74 (Tyr74) interacts with putrescine. Residues Gln75, Asp99, Asp119, 150-151, and Asp168 each bind S-adenosyl 3-(methylsulfanyl)propylamine; that span reads DG. Asp168 acts as the Proton acceptor in catalysis. Putrescine is bound by residues 168-171 and Tyr236; that span reads DSSD.

This sequence belongs to the spermidine/spermine synthase family.

The enzyme catalyses S-adenosyl 3-(methylsulfanyl)propylamine + putrescine = S-methyl-5'-thioadenosine + spermidine + H(+). Its pathway is amine and polyamine biosynthesis; spermidine biosynthesis; spermidine from putrescine: step 1/1. The sequence is that of Spermidine synthase from Schizosaccharomyces pombe (strain 972 / ATCC 24843) (Fission yeast).